Here is a 250-residue protein sequence, read N- to C-terminus: 2,3-bisphosphoglycerate-dependent phosphoglycerate mutase (250 aa).

Substrate is bound by residues 10–17 (RHGESQWN), 23–24 (TG), Arg-62, 89–92 (ERHY), Lys-100, 116–117 (RR), and 185–186 (GN). Catalysis depends on His-11, which acts as the Tele-phosphohistidine intermediate. Glu-89 acts as the Proton donor/acceptor in catalysis.

The protein belongs to the phosphoglycerate mutase family. BPG-dependent PGAM subfamily. In terms of assembly, homodimer.

The enzyme catalyses (2R)-2-phosphoglycerate = (2R)-3-phosphoglycerate. Its pathway is carbohydrate degradation; glycolysis; pyruvate from D-glyceraldehyde 3-phosphate: step 3/5. Catalyzes the interconversion of 2-phosphoglycerate and 3-phosphoglycerate. The sequence is that of 2,3-bisphosphoglycerate-dependent phosphoglycerate mutase from Salmonella choleraesuis (strain SC-B67).